Reading from the N-terminus, the 554-residue chain is Formate--tetrahydrofolate ligase (554 aa).

Position 63-70 (63-70 (TPAGEGKT)) interacts with ATP.

Belongs to the formate--tetrahydrofolate ligase family.

It carries out the reaction (6S)-5,6,7,8-tetrahydrofolate + formate + ATP = (6R)-10-formyltetrahydrofolate + ADP + phosphate. The protein operates within one-carbon metabolism; tetrahydrofolate interconversion. This Halothermothrix orenii (strain H 168 / OCM 544 / DSM 9562) protein is Formate--tetrahydrofolate ligase.